Reading from the N-terminus, the 158-residue chain is Small ribosomal subunit protein uS7 (158 aa).

This sequence belongs to the universal ribosomal protein uS7 family. As to quaternary structure, part of the 30S ribosomal subunit. Contacts proteins S9 and S11.

Functionally, one of the primary rRNA binding proteins, it binds directly to 16S rRNA where it nucleates assembly of the head domain of the 30S subunit. Is located at the subunit interface close to the decoding center, probably blocks exit of the E-site tRNA. The sequence is that of Small ribosomal subunit protein uS7 from Granulibacter bethesdensis (strain ATCC BAA-1260 / CGDNIH1).